The sequence spans 298 residues: Exosome complex component Rrp4 (298 aa).

The region spanning 63-131 is the S1 motif domain; it reads GDVVIGKIKD…EVKKVKLGLK (69 aa). The 59-residue stretch at 139–197 folds into the KH domain; it reads RGGIIVDITPTKVPRLIGKKGSMINMIKDKTNCKIIVGQNGLVWVKGEEDMEQLTKDII. The disordered stretch occupies residues 276-298; sequence KNKKDKPLSYGNNSGNSYILNNR. The span at 285 to 298 shows a compositional bias: polar residues; sequence YGNNSGNSYILNNR.

The protein belongs to the RRP4 family. In terms of assembly, component of the archaeal exosome complex. Forms a trimer of Rrp4 and/or Csl4 subunits. The trimer associates with a hexameric ring-like arrangement composed of 3 Rrp41-Rrp42 heterodimers.

Its subcellular location is the cytoplasm. Functionally, non-catalytic component of the exosome, which is a complex involved in RNA degradation. Increases the RNA binding and the efficiency of RNA degradation. Confers strong poly(A) specificity to the exosome. The protein is Exosome complex component Rrp4 of Methanobrevibacter smithii (strain ATCC 35061 / DSM 861 / OCM 144 / PS).